Here is a 947-residue protein sequence, read N- to C-terminus: Isoleucine--tRNA ligase (947 aa).

The 'HIGH' region signature appears at proline 57–histidine 67. Glutamate 568 serves as a coordination point for L-isoleucyl-5'-AMP. Positions lysine 609–serine 613 match the 'KMSKS' region motif. Residue lysine 612 coordinates ATP. The Zn(2+) site is built by cysteine 908, cysteine 911, cysteine 926, and cysteine 929.

The protein belongs to the class-I aminoacyl-tRNA synthetase family. IleS type 1 subfamily. As to quaternary structure, monomer. Zn(2+) serves as cofactor.

The protein localises to the cytoplasm. It carries out the reaction tRNA(Ile) + L-isoleucine + ATP = L-isoleucyl-tRNA(Ile) + AMP + diphosphate. Functionally, catalyzes the attachment of isoleucine to tRNA(Ile). As IleRS can inadvertently accommodate and process structurally similar amino acids such as valine, to avoid such errors it has two additional distinct tRNA(Ile)-dependent editing activities. One activity is designated as 'pretransfer' editing and involves the hydrolysis of activated Val-AMP. The other activity is designated 'posttransfer' editing and involves deacylation of mischarged Val-tRNA(Ile). This Persephonella marina (strain DSM 14350 / EX-H1) protein is Isoleucine--tRNA ligase.